A 504-amino-acid chain; its full sequence is ATP synthase subunit alpha (504 aa).

171-178 is a binding site for ATP; sequence GDRQTGKT.

The protein belongs to the ATPase alpha/beta chains family. As to quaternary structure, F-type ATPases have 2 components, CF(1) - the catalytic core - and CF(0) - the membrane proton channel. CF(1) has five subunits: alpha(3), beta(3), gamma(1), delta(1), epsilon(1). CF(0) has three main subunits: a(1), b(2) and c(9-12). The alpha and beta chains form an alternating ring which encloses part of the gamma chain. CF(1) is attached to CF(0) by a central stalk formed by the gamma and epsilon chains, while a peripheral stalk is formed by the delta and b chains.

The protein localises to the cell inner membrane. The catalysed reaction is ATP + H2O + 4 H(+)(in) = ADP + phosphate + 5 H(+)(out). Its function is as follows. Produces ATP from ADP in the presence of a proton gradient across the membrane. The alpha chain is a regulatory subunit. The chain is ATP synthase subunit alpha from Sulfurovum sp. (strain NBC37-1).